A 940-amino-acid polypeptide reads, in one-letter code: Mating-type protein A-alpha Z4 (940 aa).

Positions 110–182 (GAELSATPLP…AARARMGWGD (73 aa)) form a DNA-binding region, homeobox; TALE-type. 4 disordered regions span residues 333 to 618 (KQRQ…TGDP), 633 to 762 (PRDL…GLRP), 832 to 863 (GQKAGNARRRTTPVQRRVTPKAQETSEPSSLV), and 877 to 912 (EAPKPAKAPKNDRRYLERRERRLSKSSPVDSADTVR). Over residues 337–360 (ARREQRRAQKDRMDAQRRAEDRKC) the composition is skewed to basic and acidic residues. 2 stretches are compositionally biased toward acidic residues: residues 376–400 (ESDEDLDDFYASDDASDDEDDDGED) and 427–469 (ATED…EEEE). Low complexity-rich tracts occupy residues 516 to 531 (PSSRGSTPTSPVSPSP), 582 to 611 (VRSRSSPSVSSPPSVSVSLPLPSRGVPSGG), and 657 to 693 (SRSLTRSPSISSISSACSTSSSGSDTDSLFSVTSDAT). A compositionally biased stretch (acidic residues) spans 694-703 (DITEPDEATT). A compositionally biased stretch (low complexity) spans 704–724 (ADETTTQSTSASSSRDTTSQQ). A compositionally biased stretch (basic and acidic residues) spans 877 to 896 (EAPKPAKAPKNDRRYLERRE).

This sequence belongs to the TALE/M-ATYP homeobox family.

It localises to the nucleus. Specifies A-alpha-4 mating-type. May regulate the expression of genes specific to the homokaryotic cell type. This Schizophyllum commune (Split gill fungus) protein is Mating-type protein A-alpha Z4.